The following is a 341-amino-acid chain: L-threonine 3-dehydrogenase (341 aa).

Residue Cys38 participates in Zn(2+) binding. Active-site charge relay system residues include Thr40 and His43. His63, Glu64, Cys93, Cys96, Cys99, and Cys107 together coordinate Zn(2+). Residues Ile175, Asp195, Arg200, 262 to 264 (LGI), and 286 to 287 (IY) contribute to the NAD(+) site.

It belongs to the zinc-containing alcohol dehydrogenase family. Homotetramer. Zn(2+) serves as cofactor.

The protein resides in the cytoplasm. It catalyses the reaction L-threonine + NAD(+) = (2S)-2-amino-3-oxobutanoate + NADH + H(+). It participates in amino-acid degradation; L-threonine degradation via oxydo-reductase pathway; glycine from L-threonine: step 1/2. Functionally, catalyzes the NAD(+)-dependent oxidation of L-threonine to 2-amino-3-ketobutyrate. In Escherichia coli O139:H28 (strain E24377A / ETEC), this protein is L-threonine 3-dehydrogenase.